Here is a 336-residue protein sequence, read N- to C-terminus: Dihydroorotate dehydrogenase (quinone) (336 aa).

FMN-binding positions include 62–66 (AGLDK) and T86. K66 contributes to the substrate binding site. 111 to 115 (NRMGF) provides a ligand contact to substrate. Residues N139 and N172 each coordinate FMN. A substrate-binding site is contributed by N172. S175 acts as the Nucleophile in catalysis. Position 177 (N177) interacts with substrate. K217 and T245 together coordinate FMN. 246 to 247 (NT) contacts substrate. FMN-binding positions include G268, G297, and 318–319 (YS).

The protein belongs to the dihydroorotate dehydrogenase family. Type 2 subfamily. Monomer. Requires FMN as cofactor.

It is found in the cell membrane. It catalyses the reaction (S)-dihydroorotate + a quinone = orotate + a quinol. The protein operates within pyrimidine metabolism; UMP biosynthesis via de novo pathway; orotate from (S)-dihydroorotate (quinone route): step 1/1. Functionally, catalyzes the conversion of dihydroorotate to orotate with quinone as electron acceptor. This is Dihydroorotate dehydrogenase (quinone) from Salmonella arizonae (strain ATCC BAA-731 / CDC346-86 / RSK2980).